The primary structure comprises 349 residues: Isopentenyl-diphosphate delta-isomerase (349 aa).

Position 12–13 (12–13 (RK)) interacts with substrate. FMN is bound by residues Ser69, 70–72 (SMT), Ser101, and Asn129. 101–103 (SQR) contacts substrate. Gln164 lines the substrate pocket. Residue Glu165 participates in Mg(2+) binding. FMN contacts are provided by residues Lys196, Thr226, 279–281 (GIR), and 300–301 (AA).

The protein belongs to the IPP isomerase type 2 family. As to quaternary structure, homooctamer. Dimer of tetramers. FMN is required as a cofactor. It depends on NADPH as a cofactor. Mg(2+) serves as cofactor.

The protein resides in the cytoplasm. The enzyme catalyses isopentenyl diphosphate = dimethylallyl diphosphate. Functionally, involved in the biosynthesis of isoprenoids. Catalyzes the 1,3-allylic rearrangement of the homoallylic substrate isopentenyl (IPP) to its allylic isomer, dimethylallyl diphosphate (DMAPP). In Paracoccus zeaxanthinifaciens, this protein is Isopentenyl-diphosphate delta-isomerase.